We begin with the raw amino-acid sequence, 218 residues long: GILT-like protein ZK669.3 (218 aa).

Positions 1-21 (MRRLNGVFICLILFITKISYA) are cleaved as a signal peptide. N-linked (GlcNAc...) asparagine glycosylation is found at Asn-129 and Asn-185.

Belongs to the GILT family.

Its subcellular location is the secreted. In Caenorhabditis elegans, this protein is GILT-like protein ZK669.3.